The chain runs to 523 residues: 2-hydroxyisoflavanone synthase (523 aa).

The chain crosses the membrane as a helical span at residues 2 to 22 (LVELAITLLVIALFIHLRPTP). C450 is a binding site for heme.

The protein belongs to the cytochrome P450 family. Requires heme as cofactor.

Its subcellular location is the microsome membrane. The enzyme catalyses (2S)-liquiritigenin + reduced [NADPH--hemoprotein reductase] + O2 = (2R,3S)-2,4',7-trihydroxyisoflavanone + oxidized [NADPH--hemoprotein reductase] + H2O + H(+). It catalyses the reaction (2S)-naringenin + reduced [NADPH--hemoprotein reductase] + O2 = 2-hydroxy-2,3-dihydrogenistein + oxidized [NADPH--hemoprotein reductase] + H2O + H(+). 2-hydroxyisoflavanone synthase, which catalyzes the hydroxylation associated with 1,2-aryl migration of flavanones. Converts liquiritigenin and naringenin into highly unstable precursors of the isoflavones daidzein and genistein. The protein is 2-hydroxyisoflavanone synthase (CYP93C2) of Glycyrrhiza uralensis (Chinese licorice).